We begin with the raw amino-acid sequence, 72 residues long: Translation initiation factor IF-1 (72 aa).

The 72-residue stretch at 1-72 folds into the S1-like domain; the sequence is MSKEGKITLK…TRGRIIYRIS (72 aa).

It belongs to the IF-1 family. Component of the 30S ribosomal translation pre-initiation complex which assembles on the 30S ribosome in the order IF-2 and IF-3, IF-1 and N-formylmethionyl-tRNA(fMet); mRNA recruitment can occur at any time during PIC assembly.

The protein localises to the cytoplasm. In terms of biological role, one of the essential components for the initiation of protein synthesis. Stabilizes the binding of IF-2 and IF-3 on the 30S subunit to which N-formylmethionyl-tRNA(fMet) subsequently binds. Helps modulate mRNA selection, yielding the 30S pre-initiation complex (PIC). Upon addition of the 50S ribosomal subunit IF-1, IF-2 and IF-3 are released leaving the mature 70S translation initiation complex. The protein is Translation initiation factor IF-1 of Malacoplasma penetrans (strain HF-2) (Mycoplasma penetrans).